The sequence spans 433 residues: Vesicle-associated protein (433 aa).

Tandem repeats lie at residues 112 to 122 (GGGIGGGLGGG) and 219 to 229 (GGGIGGGLGGG). Residues 112–350 (GGGIGGGLGG…GGIGGGLGGG (239 aa)) form a 3 X 11 AA repeats of G-G-G-I-G-G-G-L-G-G-G region. A Nuclear localization signal motif is present at residues 266–274 (VDGKKKGKG). Repeat unit 3 spans residues 340 to 350 (GGGIGGGLGGG). 2 disordered regions span residues 366 to 389 (RVGG…DGDG) and 411 to 433 (HGKG…NVSG). Positions 423–433 (DIERPDLNVSG) are enriched in basic and acidic residues.

Egg cortex.

The protein localises to the microsome membrane. The protein resides in the nucleus. It is found in the endoplasmic reticulum membrane. May function as a multidomain RNA-binding protein. May play a role in nuclear RNA processing and in early development. In Strongylocentrotus purpuratus (Purple sea urchin), this protein is Vesicle-associated protein (VAP-1).